Here is a 367-residue protein sequence, read N- to C-terminus: Pantothenate kinase CAB1 (367 aa).

Belongs to the type II pantothenate kinase family.

It is found in the cytoplasm. The protein resides in the nucleus. The catalysed reaction is (R)-pantothenate + ATP = (R)-4'-phosphopantothenate + ADP + H(+). It functions in the pathway cofactor biosynthesis; coenzyme A biosynthesis; CoA from (R)-pantothenate: step 1/5. Its activity is regulated as follows. Regulated by feedback inhibition by malonyl-CoA. Plays a role in the physiological regulation of the intracellular CoA concentration. This Saccharomyces cerevisiae (strain ATCC 204508 / S288c) (Baker's yeast) protein is Pantothenate kinase CAB1 (CAB1).